Consider the following 167-residue polypeptide: NAD(P)H-quinone oxidoreductase subunit I, chloroplastic (167 aa).

4Fe-4S ferredoxin-type domains lie at 55–84 (GRIH…VDWK) and 95–124 (LNYS…MTEE). [4Fe-4S] cluster is bound by residues Cys64, Cys67, Cys70, Cys74, Cys104, Cys107, Cys110, and Cys114.

The protein belongs to the complex I 23 kDa subunit family. In terms of assembly, NDH is composed of at least 16 different subunits, 5 of which are encoded in the nucleus. The cofactor is [4Fe-4S] cluster.

It is found in the plastid. The protein localises to the chloroplast thylakoid membrane. The enzyme catalyses a plastoquinone + NADH + (n+1) H(+)(in) = a plastoquinol + NAD(+) + n H(+)(out). The catalysed reaction is a plastoquinone + NADPH + (n+1) H(+)(in) = a plastoquinol + NADP(+) + n H(+)(out). Functionally, NDH shuttles electrons from NAD(P)H:plastoquinone, via FMN and iron-sulfur (Fe-S) centers, to quinones in the photosynthetic chain and possibly in a chloroplast respiratory chain. The immediate electron acceptor for the enzyme in this species is believed to be plastoquinone. Couples the redox reaction to proton translocation, and thus conserves the redox energy in a proton gradient. In Draba nemorosa (Woodland whitlowgrass), this protein is NAD(P)H-quinone oxidoreductase subunit I, chloroplastic.